The following is a 269-amino-acid chain: Pyrroline-5-carboxylate reductase (269 aa).

This sequence belongs to the pyrroline-5-carboxylate reductase family.

It localises to the cytoplasm. It catalyses the reaction L-proline + NADP(+) = (S)-1-pyrroline-5-carboxylate + NADPH + 2 H(+). The catalysed reaction is L-proline + NAD(+) = (S)-1-pyrroline-5-carboxylate + NADH + 2 H(+). Its pathway is amino-acid biosynthesis; L-proline biosynthesis; L-proline from L-glutamate 5-semialdehyde: step 1/1. With respect to regulation, inhibited by p-chloromercuribenzoate. Catalyzes the reduction of 1-pyrroline-5-carboxylate (PCA) to L-proline. Does not catalyze the reverse reaction. The chain is Pyrroline-5-carboxylate reductase from Escherichia coli (strain K12).